The sequence spans 388 residues: MAKGKKLSFSFHTYQDSVTGTEVVRLTPPDVICHRNYFYQKCFSNDGSKLLFGGAFDGPWNYYLLDLKTQQATQLTEGTGDNTFGGFLSPDDDALYYVKNVRNLMRVDLNTLEETNIYQVPDDWVGYGTWVANSDCTKMVGIEIKKEDWKPLTDWKKFQEFYFTNPCCRLIRIDLKTGEATTILKENQWLGHPIYRPGDDNTVAFCHEGPHDLVDARMWFINEDGSNMRKVKEHAPGESCTHEFWVPNGSALAYVSYLKGSTNRFICSVDPVTLENRQLTEMPPCSHLMSNYDGTLMVGDGCNAPVDVKDDGGYKIENDPFLYVFNMKTGKHFQVAQHNTSWEVLEGDRQVTHPHPSFTPDDKHILFTSDVDGKPALYLAKVPDSVWQ.

It localises to the periplasm. It catalyses the reaction 4-(4-deoxy-alpha-D-galact-4-enuronosyl)-D-galacturonate = 2 5-dehydro-4-deoxy-D-glucuronate. It functions in the pathway glycan metabolism; pectin degradation; 2-dehydro-3-deoxy-D-gluconate from pectin: step 3/5. Functionally, involved in degradation of pectin, which causes soft-rod disease in plants. In Dickeya dadantii (strain 3937) (Erwinia chrysanthemi (strain 3937)), this protein is Oligogalacturonate lyase (ogl).